The sequence spans 777 residues: Semaphorin-3D (777 aa).

The signal sequence occupies residues 1–37; it reads MNVTKDENPRSRSQDLHLFHAWMMLIMTVLFLPVTET. One can recognise a Sema domain in the interval 44-531; that stretch reads RLKLTYKDLL…SWDGLVQLSL (488 aa). Cys-117 and Cys-128 are disulfide-bonded. An N-linked (GlcNAc...) asparagine glycan is attached at Asn-139. 4 disulfide bridges follow: Cys-146/Cys-155, Cys-286/Cys-398, Cys-310/Cys-358, and Cys-534/Cys-552. Positions 533-585 constitute a PSI domain; sequence RCDTYGKACADCCLARDPYCAWDGNACSRYAPTSKRRARRQDVKYGDPITQCW. The Ig-like C2-type domain occupies 592–680; it reads SHETADEKVI…TFIHTIVKLT (89 aa). N-linked (GlcNAc...) asparagine glycans are attached at residues Asn-607 and Asn-724. A disulfide bridge links Cys-665 with Cys-731. Over residues 740 to 765 the composition is skewed to basic residues; it reads RRQRNKGSPKWKHMQEMKKKRNRRHH. The tract at residues 740 to 777 is disordered; that stretch reads RRQRNKGSPKWKHMQEMKKKRNRRHHRDLDELQRSVAT. Residues 766–777 show a composition bias toward basic and acidic residues; that stretch reads RDLDELQRSVAT.

This sequence belongs to the semaphorin family.

Its subcellular location is the secreted. Induces the collapse and paralysis of neuronal growth cones. Could potentially act as repulsive cues toward specific neuronal populations. Binds to neuropilin. In Mus musculus (Mouse), this protein is Semaphorin-3D (Sema3d).